The chain runs to 286 residues: Flagellar filament 33 kDa core protein (286 aa).

This sequence belongs to the bacterial flagellin family. In terms of assembly, the flagellum consists of an outer layer composed of repeating units of FlaA around a core that contains several antigenically related polypeptides.

Its subcellular location is the periplasmic flagellum. The protein localises to the periplasm. Component of the core of the flagella. This chain is Flagellar filament 33 kDa core protein, found in Treponema phagedenis.